A 72-amino-acid polypeptide reads, in one-letter code: NADH dehydrogenase [ubiquinone] 1 beta subcomplex subunit 3-A (72 aa).

Residues 31–48 (ALPGIGIGVGAFCVYLVG) form a helical membrane-spanning segment.

Belongs to the complex I NDUFB3 subunit family. As to quaternary structure, complex I is composed of at least 49 different subunits.

It is found in the mitochondrion inner membrane. Its function is as follows. Accessory subunit of the mitochondrial membrane respiratory chain NADH dehydrogenase (Complex I), that is believed not to be involved in catalysis. Complex I functions in the transfer of electrons from NADH to the respiratory chain. The immediate electron acceptor for the enzyme is believed to be ubiquinone. This chain is NADH dehydrogenase [ubiquinone] 1 beta subcomplex subunit 3-A, found in Arabidopsis thaliana (Mouse-ear cress).